A 405-amino-acid chain; its full sequence is Probable tRNA sulfurtransferase (405 aa).

The THUMP domain maps to alanine 60–leucine 165. Residues methionine 183 to leucine 184, histidine 208 to phenylalanine 209, arginine 265, glycine 287, and glutamine 296 contribute to the ATP site.

Belongs to the ThiI family.

It is found in the cytoplasm. The enzyme catalyses [ThiI sulfur-carrier protein]-S-sulfanyl-L-cysteine + a uridine in tRNA + 2 reduced [2Fe-2S]-[ferredoxin] + ATP + H(+) = [ThiI sulfur-carrier protein]-L-cysteine + a 4-thiouridine in tRNA + 2 oxidized [2Fe-2S]-[ferredoxin] + AMP + diphosphate. The catalysed reaction is [ThiS sulfur-carrier protein]-C-terminal Gly-Gly-AMP + S-sulfanyl-L-cysteinyl-[cysteine desulfurase] + AH2 = [ThiS sulfur-carrier protein]-C-terminal-Gly-aminoethanethioate + L-cysteinyl-[cysteine desulfurase] + A + AMP + 2 H(+). It participates in cofactor biosynthesis; thiamine diphosphate biosynthesis. Its function is as follows. Catalyzes the ATP-dependent transfer of a sulfur to tRNA to produce 4-thiouridine in position 8 of tRNAs, which functions as a near-UV photosensor. Also catalyzes the transfer of sulfur to the sulfur carrier protein ThiS, forming ThiS-thiocarboxylate. This is a step in the synthesis of thiazole, in the thiamine biosynthesis pathway. The sulfur is donated as persulfide by IscS. This chain is Probable tRNA sulfurtransferase, found in Lactobacillus helveticus (strain DPC 4571).